The primary structure comprises 103 residues: Trp operon repressor homolog (103 aa).

A DNA-binding region spans residues 62 to 85; the sequence is QRKISELLGVGVATITRGSNELKH.

It belongs to the TrpR family. In terms of assembly, homodimer.

Its subcellular location is the cytoplasm. This protein is an aporepressor. When complexed with L-tryptophan it binds the operator region of the trp operon and prevents the initiation of transcription. This Photobacterium profundum (strain SS9) protein is Trp operon repressor homolog.